A 720-amino-acid polypeptide reads, in one-letter code: Connector enhancer of kinase suppressor of ras 1 (720 aa).

In terms of domain architecture, SAM spans 7 to 70; the sequence is WTPGKVATWL…LGGVEQLQAL (64 aa). The CRIC domain occupies 78 to 164; the sequence is NLQSLTEGLL…QVLHEDGPAA (87 aa). In terms of domain architecture, PDZ spans 196–285; the sequence is KAVLEQVQLD…GLSLVLKKIP (90 aa). The disordered stretch occupies residues 285 to 390; that stretch reads PIPETPPQTP…RKKSKGLATR (106 aa). The span at 304–317 shows a compositional bias: low complexity; it reads RSPSLSLAPLSPRA. Residues S307 and S314 each carry the phosphoserine modification. Positions 348–359 are enriched in pro residues; it reads EPLPIPPEPPAI. The segment covering 379 to 390 has biased composition (basic residues); it reads VGRKKSKGLATR. The region spanning 403–502 is the PH domain; it reads RPDCDGWLLL…WVRHLITCIS (100 aa). The interval 504-573 is disordered; it reads YQSPGRAPPP…TSFGSLTDSS (70 aa). Positions 518 to 530 are enriched in acidic residues; it reads CYSETEAEDPDDE. Residues 533–546 show a composition bias toward low complexity; that stretch reads SHSASPSPAQAGSP. Residues 553-571 show a composition bias toward polar residues; the sequence is PAATPTQRSPRTSFGSLTD. Positions 615–646 form a coiled coil; it reads QLNERVHRVRALQSTLKAKLQELQVLEEVLGD. Residues 676-720 form a disordered region; that stretch reads QAEGSSHILTSDSTEQSPHSLPSDPEEHSHLCPLTSESSLRPPDL. Residues 678–695 show a composition bias toward polar residues; that stretch reads EGSSHILTSDSTEQSPHS.

It belongs to the CNKSR family. As to quaternary structure, interacts with RHO and RALGDS. Phosphorylated on tyrosine.

The protein resides in the cytoplasm. The protein localises to the membrane. Its function is as follows. May function as an adapter protein or regulator of Ras signaling pathways. In Homo sapiens (Human), this protein is Connector enhancer of kinase suppressor of ras 1 (CNKSR1).